The following is a 302-amino-acid chain: UDP-N-acetylenolpyruvoylglucosamine reductase (302 aa).

Positions 29–192 (KVGGPVDLLA…VAVTLQLSED (164 aa)) constitute an FAD-binding PCMH-type domain. Residue R172 is part of the active site. S221 acts as the Proton donor in catalysis. The active site involves E291.

The protein belongs to the MurB family. FAD is required as a cofactor.

It localises to the cytoplasm. The catalysed reaction is UDP-N-acetyl-alpha-D-muramate + NADP(+) = UDP-N-acetyl-3-O-(1-carboxyvinyl)-alpha-D-glucosamine + NADPH + H(+). It functions in the pathway cell wall biogenesis; peptidoglycan biosynthesis. In terms of biological role, cell wall formation. This chain is UDP-N-acetylenolpyruvoylglucosamine reductase, found in Trichlorobacter lovleyi (strain ATCC BAA-1151 / DSM 17278 / SZ) (Geobacter lovleyi).